The sequence spans 317 residues: DNA-directed RNA polymerase subunit alpha (317 aa).

The interval 1-229 is alpha N-terminal domain (alpha-NTD); sequence MLNEFIYPDK…KHYELLENIF (229 aa). An alpha C-terminal domain (alpha-CTD) region spans residues 245–317; it reads AEKLSLSIEE…ELGMNIETQR (73 aa).

Belongs to the RNA polymerase alpha chain family. In terms of assembly, homodimer. The RNAP catalytic core consists of 2 alpha, 1 beta, 1 beta' and 1 omega subunit. When a sigma factor is associated with the core the holoenzyme is formed, which can initiate transcription.

It carries out the reaction RNA(n) + a ribonucleoside 5'-triphosphate = RNA(n+1) + diphosphate. Its function is as follows. DNA-dependent RNA polymerase catalyzes the transcription of DNA into RNA using the four ribonucleoside triphosphates as substrates. In Aquifex aeolicus (strain VF5), this protein is DNA-directed RNA polymerase subunit alpha.